Consider the following 779-residue polypeptide: MKLVIVESPAKAKTINKYLGDEFKVIASFGHIRDLPSKKGSVLPDKNFAMEYDISDKASKYVDAIVKYARKAEAVYLATDPDREGESISWHVAEVIKEKNKVESDDFFKRVAFNEITKKAIIHAVENPRKLDTNLVNAQQARRALDYLVGFTLSPLLWRKLPGCKSAGRVQSVALRLICDREDEIERFKAEEYWDISLKMQNSNNELFTAKLTHVNDQKLKKFSIINEKEAKDLTRKLKLQKFYVEKIEKKQQKRQPQPPFITSSLQQEAARKLGFSAKKTMQIAQKLYEGVDIGKETIGLITYMRTDGVTLSNDAIADIRKLIDKNYGNKYLPINPRIYQSKVKNAQEAHEAIRPTNITYTPDNLKQKLEKDYYKLYELIWQRTIACQMENVIMDLVIANLASENKEYLAKANGSIIAFDGFYKVYRESLDDEDEEDNKMLPPLKAQEHIKTKEVIPNKHFTEPPPRYSEASLVKKLEELGIGRPSTYASILSVLQDRKYVTLEKKRFIPEELGRLVTVFLVGFFKKYVEYDFTAGLENELDEIAAGKLEWKTSLNNFWSGFNNNIESVNEQKITEIINYLQKALDYHLFGENKESKVCPSCKTGQLSLKLGKFGAFLACSNYPECTFKKSIVSGNDNNEDEGNLSTILNDNKILGTDKDGVEIYLKTGPYGPYIQLGEQCGKVKPKRTPVPTNLKQSEITLEVALKLLSLPLKIGIHKDSGEEIIIGYSKFGPYIKYMCKFISVPKKYDFLNLNLDDAIKLIENNKAKLEKKHRSMV.

The Toprim domain maps to 1–111 (MKLVIVESPA…VESDDFFKRV (111 aa)). 2 residues coordinate Mg(2+): glutamate 7 and aspartate 80. The Topo IA-type catalytic domain occupies 132-568 (DTNLVNAQQA…FWSGFNNNIE (437 aa)). An interaction with DNA region spans residues 166–171 (SAGRVQ). The O-(5'-phospho-DNA)-tyrosine intermediate role is filled by tyrosine 304. The C4-type zinc-finger motif lies at 600–627 (CPSCKTGQLSLKLGKFGAFLACSNYPEC).

Belongs to the type IA topoisomerase family. Monomer. Mg(2+) serves as cofactor.

It carries out the reaction ATP-independent breakage of single-stranded DNA, followed by passage and rejoining.. Its function is as follows. Releases the supercoiling and torsional tension of DNA, which is introduced during the DNA replication and transcription, by transiently cleaving and rejoining one strand of the DNA duplex. Introduces a single-strand break via transesterification at a target site in duplex DNA. The scissile phosphodiester is attacked by the catalytic tyrosine of the enzyme, resulting in the formation of a DNA-(5'-phosphotyrosyl)-enzyme intermediate and the expulsion of a 3'-OH DNA strand. The free DNA strand then undergoes passage around the unbroken strand, thus removing DNA supercoils. Finally, in the religation step, the DNA 3'-OH attacks the covalent intermediate to expel the active-site tyrosine and restore the DNA phosphodiester backbone. This Rickettsia typhi (strain ATCC VR-144 / Wilmington) protein is DNA topoisomerase 1.